A 564-amino-acid polypeptide reads, in one-letter code: Eukaryotic translation initiation factor 3 subunit L (564 aa).

In terms of domain architecture, PCI spans 331–537 (DAIRVFANIL…IHIADTKVAR (207 aa)).

The protein belongs to the eIF-3 subunit L family. In terms of assembly, component of the eukaryotic translation initiation factor 3 (eIF-3) complex, which is composed of 13 subunits: EIF3A, EIF3B, EIF3C, EIF3D, EIF3E, EIF3F, EIF3G, EIF3H, EIF3I, EIF3J, EIF3K, EIF3L and EIF3M.

The protein resides in the cytoplasm. In terms of biological role, component of the eukaryotic translation initiation factor 3 (eIF-3) complex, which is involved in protein synthesis of a specialized repertoire of mRNAs and, together with other initiation factors, stimulates binding of mRNA and methionyl-tRNAi to the 40S ribosome. The eIF-3 complex specifically targets and initiates translation of a subset of mRNAs involved in cell proliferation. In Gallus gallus (Chicken), this protein is Eukaryotic translation initiation factor 3 subunit L.